The primary structure comprises 416 residues: D-amino acid dehydrogenase 2 (416 aa).

3 to 17 lines the FAD pocket; that stretch reads ITVLGAGVVGTAAAY.

This sequence belongs to the DadA oxidoreductase family. Requires FAD as cofactor.

It catalyses the reaction a D-alpha-amino acid + A + H2O = a 2-oxocarboxylate + AH2 + NH4(+). Its function is as follows. Oxidative deamination of D-amino acids. The polypeptide is D-amino acid dehydrogenase 2 (dadA2) (Mesorhizobium japonicum (strain LMG 29417 / CECT 9101 / MAFF 303099) (Mesorhizobium loti (strain MAFF 303099))).